Here is a 235-residue protein sequence, read N- to C-terminus: Uridylate kinase (235 aa).

Residue 9 to 12 (KLSG) participates in ATP binding. Positions 17–22 (GDQGYG) are involved in allosteric activation by GTP. Position 51 (Gly51) interacts with UMP. Positions 52 and 56 each coordinate ATP. UMP-binding positions include Asp71 and 132–139 (CGNPFFTT). ATP-binding residues include Thr159, Tyr165, and Asp168.

The protein belongs to the UMP kinase family. Homohexamer.

It is found in the cytoplasm. It carries out the reaction UMP + ATP = UDP + ADP. The protein operates within pyrimidine metabolism; CTP biosynthesis via de novo pathway; UDP from UMP (UMPK route): step 1/1. Its activity is regulated as follows. Allosterically activated by GTP. Inhibited by UTP. Catalyzes the reversible phosphorylation of UMP to UDP. The sequence is that of Uridylate kinase from Synechococcus sp. (strain WH7803).